Here is a 508-residue protein sequence, read N- to C-terminus: Protein FAM227B (508 aa).

Disordered regions lie at residues 1–22 (MAGQ…MQEP) and 485–508 (ASLS…EEEY). Low complexity predominate over residues 486–497 (SLSSSSSSSPSS).

This sequence belongs to the FAM227 family.

The chain is Protein FAM227B (FAM227B) from Homo sapiens (Human).